The sequence spans 590 residues: Type I inositol polyphosphate 5-phosphatase 1 (590 aa).

The disordered stretch occupies residues 47 to 73; sequence DYSADSDDDYEDRSQEFDPISSGVTNP. The span at 48–57 shows a compositional bias: acidic residues; the sequence is YSADSDDDYE. A Phosphoserine modification is found at S60. 2 catalytic regions span residues 445 to 460 and 523 to 538; these read ERII…INLS and GKRR…WNGK.

This sequence belongs to the inositol polyphosphate 5-phosphatase family. As to expression, expressed ubiquitously.

The enzyme catalyses 1D-myo-inositol 1,4,5-trisphosphate + H2O = 1D-myo-inositol 1,4-bisphosphate + phosphate. It carries out the reaction 1D-myo-inositol 1,3,4,5-tetrakisphosphate + H2O = 1D-myo-inositol 1,3,4-trisphosphate + phosphate. Has phosphatase activity toward Ins(1,4,5)P3 and Ins(1,3,4,5)P4, but not toward Ins(1,4)P2, Ins(1)P. Seems to be involved in the abscisic acid (ABA) signaling pathway. Could also be able to hydrolyze PtdIns(4,5)P2 and PtdIns(3,4,5)P3. The polypeptide is Type I inositol polyphosphate 5-phosphatase 1 (Arabidopsis thaliana (Mouse-ear cress)).